Here is a 258-residue protein sequence, read N- to C-terminus: C4b-binding protein beta chain (258 aa).

The first 15 residues, 1-15, serve as a signal peptide directing secretion; sequence MLCLVVCCLIWLISA. Residues 18 to 75 enclose the Sushi 1; atypical; lacks a Cys domain; the sequence is GSCSEPPPVNNSVFVGKETEEQILGIYLCIKGYHLVGKKSLVFDPSKEWNSTLPECLL. N-linked (GlcNAc...) asparagine glycosylation is found at asparagine 27, asparagine 67, asparagine 89, asparagine 95, and asparagine 114. 5 disulfide bridges follow: cysteine 46–cysteine 73, cysteine 78–cysteine 118, cysteine 104–cysteine 131, cysteine 136–cysteine 176, and cysteine 162–cysteine 188. Sushi domains lie at 76 to 133 and 134 to 190; these read GHCP…ICRS and RDCE…TCES. Asparagine 218 is a glycosylation site (N-linked (GlcNAc...) asparagine).

Disulfide-linked complex of alpha and beta chains.

The protein localises to the secreted. Controls the classical pathway of complement activation. It binds as a cofactor to C3b/C4b inactivator (C3bINA), which then hydrolyzes the complement fragment C4b. It also accelerates the degradation of the C4bC2a complex (C3 convertase) by dissociating the complement fragment C2a. It also interacts with anticoagulant protein S and with serum amyloid P component. The sequence is that of C4b-binding protein beta chain (C4bpb) from Rattus norvegicus (Rat).